Here is a 290-residue protein sequence, read N- to C-terminus: ATP synthase subunit a (290 aa).

6 consecutive transmembrane segments (helical) span residues Ala-44–Phe-64, Val-104–Leu-124, Leu-161–Ile-181, Ile-194–Ala-214, Val-233–Val-253, and Ala-260–Val-280.

Belongs to the ATPase A chain family. In terms of assembly, F-type ATPases have 2 components, CF(1) - the catalytic core - and CF(0) - the membrane proton channel. CF(1) has five subunits: alpha(3), beta(3), gamma(1), delta(1), epsilon(1). CF(0) has three main subunits: a(1), b(2) and c(9-12). The alpha and beta chains form an alternating ring which encloses part of the gamma chain. CF(1) is attached to CF(0) by a central stalk formed by the gamma and epsilon chains, while a peripheral stalk is formed by the delta and b chains.

The protein resides in the cell inner membrane. In terms of biological role, key component of the proton channel; it plays a direct role in the translocation of protons across the membrane. This chain is ATP synthase subunit a, found in Pseudomonas fluorescens (strain ATCC BAA-477 / NRRL B-23932 / Pf-5).